Here is a 21-residue protein sequence, read N- to C-terminus: Thanatin (21 aa).

Cys-11 and Cys-18 are joined by a disulfide.

Its subcellular location is the secreted. In terms of biological role, insect defense peptide with a broad spectrum of activity against Gram-positive and Gram-negative bacteria and fungi. No activity against S.aureus. Stops respiration in bacteria but does not permeabilize their inner membranes. The chain is Thanatin from Podisus maculiventris (Spined soldier bug).